We begin with the raw amino-acid sequence, 198 residues long: Nucleoid occlusion factor SlmA (198 aa).

Residues 10–70 (NRREEILQSL…SLIEFIEDSL (61 aa)) enclose the HTH tetR-type domain. A DNA-binding region (H-T-H motif) is located at residues 33–52 (TTAKLAASVGVSEAALYRHF). Residues 119–144 (DRLQGRINQLFERIEVQLRQVMREKK) are a coiled coil.

Belongs to the nucleoid occlusion factor SlmA family. Homodimer. Interacts with FtsZ.

The protein localises to the cytoplasm. It is found in the nucleoid. Required for nucleoid occlusion (NO) phenomenon, which prevents Z-ring formation and cell division over the nucleoid. Acts as a DNA-associated cell division inhibitor that binds simultaneously chromosomal DNA and FtsZ, and disrupts the assembly of FtsZ polymers. SlmA-DNA-binding sequences (SBS) are dispersed on non-Ter regions of the chromosome, preventing FtsZ polymerization at these regions. The chain is Nucleoid occlusion factor SlmA from Klebsiella pneumoniae (strain 342).